Reading from the N-terminus, the 536-residue chain is Glucan 1,6-alpha-glucosidase (536 aa).

Aspartate 194 functions as the Nucleophile in the catalytic mechanism. Glutamate 236 (proton donor) is an active-site residue.

The protein belongs to the glycosyl hydrolase 13 family.

The protein localises to the cytoplasm. The enzyme catalyses Hydrolysis of (1-&gt;6)-alpha-D-glucosidic linkages in (1-&gt;6)-alpha-D-glucans and derived oligosaccharides.. Its function is as follows. The physiological substrates may be short isomaltosaccharides. The protein is Glucan 1,6-alpha-glucosidase (dexB) of Streptococcus mutans serotype c (strain ATCC 700610 / UA159).